Consider the following 360-residue polypeptide: Peptide chain release factor 1 (360 aa).

At Gln-235 the chain carries N5-methylglutamine. Residues Arg-285–Arg-295 are compositionally biased toward basic and acidic residues. The disordered stretch occupies residues Arg-285 to Thr-309.

This sequence belongs to the prokaryotic/mitochondrial release factor family. Post-translationally, methylated by PrmC. Methylation increases the termination efficiency of RF1.

The protein resides in the cytoplasm. In terms of biological role, peptide chain release factor 1 directs the termination of translation in response to the peptide chain termination codons UAG and UAA. The chain is Peptide chain release factor 1 (prfA) from Haemophilus influenzae (strain ATCC 51907 / DSM 11121 / KW20 / Rd).